A 95-amino-acid chain; its full sequence is Large ribosomal subunit protein bL27 (95 aa).

Positions 1–12 are excised as a propeptide; it reads MLLIKKINLQFF. Residues 17–37 are disordered; sequence GVGSTKNGRDSNPKYLGAKKS.

Belongs to the bacterial ribosomal protein bL27 family. In terms of processing, the N-terminus is cleaved by ribosomal processing cysteine protease Prp.

The protein is Large ribosomal subunit protein bL27 of Malacoplasma penetrans (strain HF-2) (Mycoplasma penetrans).